The sequence spans 142 residues: Ribosome-binding factor A (142 aa).

Residues 120-130 (EVRRDIDHAPA) show a composition bias toward basic and acidic residues. Residues 120 to 142 (EVRRDIDHAPAEDEFPTDGDDGQ) form a disordered region. Residues 131-142 (EDEFPTDGDDGQ) show a composition bias toward acidic residues.

This sequence belongs to the RbfA family. As to quaternary structure, monomer. Binds 30S ribosomal subunits, but not 50S ribosomal subunits or 70S ribosomes.

Its subcellular location is the cytoplasm. Functionally, one of several proteins that assist in the late maturation steps of the functional core of the 30S ribosomal subunit. Associates with free 30S ribosomal subunits (but not with 30S subunits that are part of 70S ribosomes or polysomes). Required for efficient processing of 16S rRNA. May interact with the 5'-terminal helix region of 16S rRNA. This chain is Ribosome-binding factor A, found in Paramagnetospirillum magneticum (strain ATCC 700264 / AMB-1) (Magnetospirillum magneticum).